Here is a 1015-residue protein sequence, read N- to C-terminus: DNA polymerase catalytic subunit (1015 aa).

Belongs to the DNA polymerase type-B family. In terms of assembly, forms a complex with the major DNA-binding protein BALF2, the DNA polymerase processivity factor BMRF1, and the alkaline exonuclease BGLF5. Interacts with the putative helicase-primase complex composed of BBLF4, BSLF1 and BBLF2/3 proteins; these interactions may coordinate leading and lagging strand DNA synthesis at the replication fork.

The protein resides in the host nucleus. It carries out the reaction DNA(n) + a 2'-deoxyribonucleoside 5'-triphosphate = DNA(n+1) + diphosphate. Its function is as follows. Replicates viral genomic DNA in the late phase of lytic infection, producing long concatemeric DNA. The replication complex is composed of six viral proteins: the DNA polymerase, processivity factor, primase, primase-associated factor, helicase, and ssDNA-binding protein. This chain is DNA polymerase catalytic subunit, found in Homo sapiens (Human).